The chain runs to 342 residues: Transmembrane protein 268 (342 aa).

A run of 2 helical transmembrane segments spans residues 106-126 (AFAV…SQMF) and 133-153 (AGVL…VLVF). Residues 245–267 (VEGPEDLEDAPLLPSTPGPQERP) form a disordered region.

As to quaternary structure, interacts with ITGAM; this interaction inhibits ITGAM degradation via the endosome-lysosome pathway. Interacts with ITGB4; this interaction prevents ITGB4 degradation.

Its subcellular location is the cell membrane. Stabilizes cell surface expression of ITGAM and participates in the adhesion and migration of phagocytes during bacterial clearance. This Mus musculus (Mouse) protein is Transmembrane protein 268.